The chain runs to 55 residues: Cytochrome c oxidase subunit 7s (55 aa).

A helical transmembrane segment spans residues Leu-13–Val-35.

In terms of assembly, slime mold cytochrome c oxidase consists of at least seven different polypeptides species, subunits I, II, III, IV, V, VI, and VIIe/s in order of MW.

It is found in the mitochondrion inner membrane. It carries out the reaction 4 Fe(II)-[cytochrome c] + O2 + 8 H(+)(in) = 4 Fe(III)-[cytochrome c] + 2 H2O + 4 H(+)(out). In terms of biological role, this protein is one of the nuclear-coded polypeptide chains of cytochrome c oxidase, the terminal oxidase in mitochondrial electron transport. This chain is Cytochrome c oxidase subunit 7s (cxgS), found in Dictyostelium discoideum (Social amoeba).